The sequence spans 64 residues: H/ACA ribonucleoprotein complex subunit 3-like protein (64 aa).

Belongs to the NOP10 family. As to quaternary structure, component of the small nucleolar ribonucleoprotein particles containing H/ACA-type snoRNAs (H/ACA snoRNPs).

Its subcellular location is the nucleus. It is found in the nucleolus. Required for ribosome biogenesis. Part of a complex which catalyzes pseudouridylation of rRNA. This involves the isomerization of uridine such that the ribose is subsequently attached to C5, instead of the normal N1. Pseudouridine ('psi') residues may serve to stabilize the conformation of rRNAs. In Arabidopsis thaliana (Mouse-ear cress), this protein is H/ACA ribonucleoprotein complex subunit 3-like protein.